Reading from the N-terminus, the 551-residue chain is Protein PNS1 (551 aa).

Positions Met-1–Thr-72 are disordered. The Cytoplasmic portion of the chain corresponds to Met-1–Asp-94. The span at Gln-8 to Gln-19 shows a compositional bias: low complexity. The segment covering Pro-45–Thr-63 has biased composition (polar residues). The helical transmembrane segment at Ile-95–Ala-115 threads the bilayer. Over Ile-116–Thr-147 the chain is Extracellular. A helical transmembrane segment spans residues Val-148–Ala-168. Topologically, residues Leu-169–Leu-177 are cytoplasmic. A helical transmembrane segment spans residues Glu-178–Ile-198. The Extracellular segment spans residues Gln-199 to Tyr-200. Residues Trp-201 to Met-221 form a helical membrane-spanning segment. Residues Arg-222–Ser-244 are Cytoplasmic-facing. A helical transmembrane segment spans residues Val-245–Phe-265. The Extracellular portion of the chain corresponds to Thr-266–Gln-307. A helical transmembrane segment spans residues Val-308–Tyr-328. Over Gly-329 to Ser-356 the chain is Cytoplasmic. Residues Ile-357 to Phe-377 form a helical membrane-spanning segment. The Extracellular segment spans residues Arg-378–Asp-386. The helical transmembrane segment at Met-387–Val-407 threads the bilayer. The Cytoplasmic portion of the chain corresponds to Glu-408–Thr-452. Residues Ala-453–Leu-473 traverse the membrane as a helical segment. Over Arg-474–Ala-488 the chain is Extracellular. A helical transmembrane segment spans residues Pro-489–Ile-509. At Asp-510–His-551 the chain is on the cytoplasmic side.

This sequence belongs to the CTL (choline transporter-like) family.

Its subcellular location is the cell membrane. In terms of biological role, probably involved in transport through the plasma membrane. The chain is Protein PNS1 (PNS1) from Cryptococcus neoformans var. neoformans serotype D (strain B-3501A) (Filobasidiella neoformans).